Here is a 90-residue protein sequence, read N- to C-terminus: Small ribosomal subunit protein uS15c (90 aa).

This sequence belongs to the universal ribosomal protein uS15 family. Part of the 30S ribosomal subunit.

The protein localises to the plastid. Its subcellular location is the chloroplast. The polypeptide is Small ribosomal subunit protein uS15c (rps15) (Daucus carota (Wild carrot)).